The primary structure comprises 392 residues: Homeobox protein engrailed-1 (392 aa).

Disordered stretches follow at residues 1 to 100 (MEEQ…AQLH), 132 to 164 (ARGG…TRAP), 219 to 251 (KPSD…PAIL), and 282 to 306 (SDRP…DKRP). Positions 14-36 (SALGAAAAATPGGLSLSLSPGAS) are enriched in low complexity. Pro residues-rich tracts occupy residues 51–66 (SPQP…PCLP) and 75–84 (PPHPPPPPPQ). Over residues 85–100 (HLAAPAHQPQPAAQLH) the composition is skewed to low complexity. Gly residues predominate over residues 223-236 (TGGGGSGGGAGSPG). Residues 303-362 (DKRPRTAFTAEQLQRLKAEFQANRYITEQRRQTLAQELSLNESQIKIWFQNKRAKIKKAT) constitute a DNA-binding region (homeobox).

The protein belongs to the engrailed homeobox family.

The protein resides in the nucleus. In terms of biological role, required for proper formation of the apical ectodermal ridge and correct dorsal-ventral patterning in the limb. The chain is Homeobox protein engrailed-1 (EN1) from Homo sapiens (Human).